Consider the following 323-residue polypeptide: Aspartate carbamoyltransferase catalytic subunit (323 aa).

2 residues coordinate carbamoyl phosphate: R71 and T72. K99 serves as a coordination point for L-aspartate. The carbamoyl phosphate site is built by R121, H151, and Q154. Positions 184 and 239 each coordinate L-aspartate. The carbamoyl phosphate site is built by G280 and P281.

The protein belongs to the aspartate/ornithine carbamoyltransferase superfamily. ATCase family. As to quaternary structure, heterododecamer (2C3:3R2) of six catalytic PyrB chains organized as two trimers (C3), and six regulatory PyrI chains organized as three dimers (R2).

It carries out the reaction carbamoyl phosphate + L-aspartate = N-carbamoyl-L-aspartate + phosphate + H(+). The protein operates within pyrimidine metabolism; UMP biosynthesis via de novo pathway; (S)-dihydroorotate from bicarbonate: step 2/3. Its function is as follows. Catalyzes the condensation of carbamoyl phosphate and aspartate to form carbamoyl aspartate and inorganic phosphate, the committed step in the de novo pyrimidine nucleotide biosynthesis pathway. This Cupriavidus metallidurans (strain ATCC 43123 / DSM 2839 / NBRC 102507 / CH34) (Ralstonia metallidurans) protein is Aspartate carbamoyltransferase catalytic subunit.